Reading from the N-terminus, the 709-residue chain is Polyribonucleotide nucleotidyltransferase (709 aa).

Residues Asp-485 and Asp-491 each contribute to the Mg(2+) site. Residues 552-611 form the KH domain; that stretch reads PRIHTMKIDPKKIKDVIGKGGATIRALTEETGTSIDIDDDGTVKIAATDNNAAKRVMERI. The S1 motif domain occupies 621–689; that stretch reads NAIYKGKVTR…RQGRIRLTMK (69 aa).

This sequence belongs to the polyribonucleotide nucleotidyltransferase family. In terms of assembly, component of the RNA degradosome, which is a multiprotein complex involved in RNA processing and mRNA degradation. It depends on Mg(2+) as a cofactor.

It is found in the cytoplasm. The catalysed reaction is RNA(n+1) + phosphate = RNA(n) + a ribonucleoside 5'-diphosphate. Involved in mRNA degradation. Catalyzes the phosphorolysis of single-stranded polyribonucleotides processively in the 3'- to 5'-direction. In Glaesserella parasuis serovar 5 (strain SH0165) (Haemophilus parasuis), this protein is Polyribonucleotide nucleotidyltransferase.